The following is a 166-amino-acid chain: Putative 4-hydroxy-4-methyl-2-oxoglutarate aldolase (166 aa).

Residues 74-77 (GDQI) and Arg96 each bind substrate. Residue Asp97 coordinates a divalent metal cation.

Belongs to the class II aldolase/RraA-like family. As to quaternary structure, homotrimer. It depends on a divalent metal cation as a cofactor.

It catalyses the reaction 4-hydroxy-4-methyl-2-oxoglutarate = 2 pyruvate. The catalysed reaction is oxaloacetate + H(+) = pyruvate + CO2. Its function is as follows. Catalyzes the aldol cleavage of 4-hydroxy-4-methyl-2-oxoglutarate (HMG) into 2 molecules of pyruvate. Also contains a secondary oxaloacetate (OAA) decarboxylase activity due to the common pyruvate enolate transition state formed following C-C bond cleavage in the retro-aldol and decarboxylation reactions. This is Putative 4-hydroxy-4-methyl-2-oxoglutarate aldolase from Xanthomonas oryzae pv. oryzae (strain MAFF 311018).